Reading from the N-terminus, the 88-residue chain is Small ribosomal subunit protein bS20 (88 aa).

The protein belongs to the bacterial ribosomal protein bS20 family.

Its function is as follows. Binds directly to 16S ribosomal RNA. In Bartonella quintana (strain Toulouse) (Rochalimaea quintana), this protein is Small ribosomal subunit protein bS20.